The primary structure comprises 354 residues: tRNA pseudouridine synthase D (354 aa).

Aspartate 86 serves as the catalytic Nucleophile. One can recognise a TRUD domain in the interval 162 to 309 (GVPNYFGPQR…LEVGRRALRL (148 aa)).

This sequence belongs to the pseudouridine synthase TruD family.

It carries out the reaction uridine(13) in tRNA = pseudouridine(13) in tRNA. Responsible for synthesis of pseudouridine from uracil-13 in transfer RNAs. In Methylococcus capsulatus (strain ATCC 33009 / NCIMB 11132 / Bath), this protein is tRNA pseudouridine synthase D.